A 35-amino-acid polypeptide reads, in one-letter code: Cecropin-B (35 aa).

A Leucine amide modification is found at L35.

It belongs to the cecropin family.

Its subcellular location is the secreted. Cecropins have lytic and antibacterial activity against several Gram-positive and Gram-negative bacteria. The sequence is that of Cecropin-B from Antheraea pernyi (Chinese oak silk moth).